The chain runs to 333 residues: Geranylgeranyl pyrophosphate synthase olcC (333 aa).

Isopentenyl diphosphate-binding residues include Lys-61, Arg-64, and His-93. Positions 100 and 104 each coordinate Mg(2+). A dimethylallyl diphosphate-binding site is contributed by Arg-109. Arg-110 lines the isopentenyl diphosphate pocket. Positions 187, 188, and 221 each coordinate dimethylallyl diphosphate. Asp-224 serves as a coordination point for Mg(2+). Dimethylallyl diphosphate contacts are provided by Asn-228, Lys-238, and Lys-248.

This sequence belongs to the FPP/GGPP synthase family. Mg(2+) serves as cofactor.

It catalyses the reaction isopentenyl diphosphate + dimethylallyl diphosphate = (2E)-geranyl diphosphate + diphosphate. The catalysed reaction is isopentenyl diphosphate + (2E)-geranyl diphosphate = (2E,6E)-farnesyl diphosphate + diphosphate. It carries out the reaction isopentenyl diphosphate + (2E,6E)-farnesyl diphosphate = (2E,6E,10E)-geranylgeranyl diphosphate + diphosphate. Its pathway is secondary metabolite biosynthesis; terpenoid biosynthesis. Geranylgeranyl pyrophosphate synthase; part of the gene cluster that mediates the biosynthesis of 15-deoxyoxalicine B. The first step of the pathway is the synthesis of nicotinyl-CoA from nicotinic acid by the nicotinic acid-CoA ligase olcI. Nicotinyl-CoA is then a substrate of polyketide synthase olcA to produce 4-hydroxy-6-(3-pyridinyl)-2H-pyran-2-one (HPPO) which is further prenylated by the polyprenyl transferase olcH to yield geranylgeranyl-HPPO. Geranylgeranyl pyrophosphate is provided by the cluster-specific geranylgeranyl pyrophosphate synthase olcC. The FAD-dependent monooxygenase olcE catalyzes the epoxidation of geranylgeranyl-HPPO and the terpene cyclase olcD catalyzes the cyclization of the terpenoid component, resulting in the formation of the tricyclic terpene moiety seen in predecaturin E. The cytochrome P450 monooxygenase then catalyzes the allylic oxidation of predecaturin E, which is followed by spirocylization with concomitant loss of one molecule of water to form decaturin E. Decaturin E is the substrate of the cytochrome P450 monooxygenase olcJ which hydroxylates it at the C-29 position to form decaturin F. The short-chain dehydrogenase/reductase olcF may catalyze the oxidation of decaturin F to generate the 29-hydroxyl-27-one intermediate, and subsequent hemiacetal formation probably leads to the formation of decaturin C. The dioxygenase olcK may be a peroxisomal enzyme that catalyzes the hydroxylation of decaturin C into decaturin A once decaturin C is shuttled into the peroxisome by the MFS transporter olcL. Finally the cytochrome P450 monooxygenase olcB catalyzes the oxidative rearrangement to yield 15-deoxyoxalicine B. In the absence of olcJ, decaturin E may be shunted to a pathway in which it is oxidized to a ketone, possibly by olcF, to form decaturin D, which undergoes further allylic oxidation to yield decaturin G. Moreover, in the absence of oclK or oclL, oclB can convert decaturin C into 15-deoxyoxalicine A. The chain is Geranylgeranyl pyrophosphate synthase olcC from Penicillium canescens.